We begin with the raw amino-acid sequence, 984 residues long: Protein translocase subunit SecA (984 aa).

ATP-binding positions include Q96, 114-118, and D595; that span reads GEGKT. 2 stretches are compositionally biased toward basic and acidic residues: residues 930–942 and 952–971; these read EHEEEKKHQRLLE and KSDKKPRPKTLKERLKEERL. Positions 930-984 are disordered; the sequence is EHEEEKKHQRLLEEAELQGVQGKSDKKPRPKTLKERLKEERLRKRKLKAKKKEQE. Residues 972-984 are compositionally biased toward basic residues; that stretch reads RKRKLKAKKKEQE.

Belongs to the SecA family. As to quaternary structure, monomer and homodimer. Part of the essential Sec protein translocation apparatus which comprises SecA, SecYEG and auxiliary proteins SecDF. Other proteins may also be involved.

The protein resides in the cell inner membrane. It localises to the cytoplasm. The catalysed reaction is ATP + H2O + cellular proteinSide 1 = ADP + phosphate + cellular proteinSide 2.. Its function is as follows. Part of the Sec protein translocase complex. Interacts with the SecYEG preprotein conducting channel. Has a central role in coupling the hydrolysis of ATP to the transfer of proteins into and across the cell membrane, serving as an ATP-driven molecular motor driving the stepwise translocation of polypeptide chains across the membrane. This chain is Protein translocase subunit SecA, found in Aquifex aeolicus (strain VF5).